A 311-amino-acid chain; its full sequence is Cell division control protein 2 homolog 3 (311 aa).

Residues 23 to 306 form the Protein kinase domain; sequence YNRMDILGEG…AKAALQHPWF (284 aa). Residues 29–37 and K52 contribute to the ATP site; that span reads LGEGTYGVV. Position 33 is a phosphothreonine (T33). Y34 is subject to Phosphotyrosine. D145 serves as the catalytic Proton acceptor.

The protein belongs to the protein kinase superfamily. CMGC Ser/Thr protein kinase family. CDC2/CDKX subfamily. In terms of assembly, forms a stable but non-covalent complex with a regulatory subunit and with a cyclin.

It carries out the reaction L-seryl-[protein] + ATP = O-phospho-L-seryl-[protein] + ADP + H(+). It catalyses the reaction L-threonyl-[protein] + ATP = O-phospho-L-threonyl-[protein] + ADP + H(+). Phosphorylation at Thr-33 or Tyr-34 inactivates the enzyme. Probably involved in the control of the cell cycle. In Trypanosoma brucei brucei, this protein is Cell division control protein 2 homolog 3 (CRK3).